We begin with the raw amino-acid sequence, 91 residues long: Peptide Ctry2146 (91 aa).

A signal peptide spans M1–A23. L33 is modified (leucine amide). Residues G37–Y91 constitute a propeptide that is removed on maturation.

The protein belongs to the non-disulfide-bridged peptide (NDBP) superfamily. Short antimicrobial peptide (group 4) family. In terms of tissue distribution, expressed by the venom gland.

The protein resides in the secreted. Its subcellular location is the target cell membrane. Antimicrobial peptide. This chain is Peptide Ctry2146, found in Chaerilus tryznai (Scorpion).